The chain runs to 513 residues: Bifunctional purine biosynthesis protein PurH (513 aa).

In terms of domain architecture, MGS-like spans 1–144 (MKRALVSVSD…KNYRDVTIVV (144 aa)).

Belongs to the PurH family.

The catalysed reaction is (6R)-10-formyltetrahydrofolate + 5-amino-1-(5-phospho-beta-D-ribosyl)imidazole-4-carboxamide = 5-formamido-1-(5-phospho-D-ribosyl)imidazole-4-carboxamide + (6S)-5,6,7,8-tetrahydrofolate. The enzyme catalyses IMP + H2O = 5-formamido-1-(5-phospho-D-ribosyl)imidazole-4-carboxamide. It participates in purine metabolism; IMP biosynthesis via de novo pathway; 5-formamido-1-(5-phospho-D-ribosyl)imidazole-4-carboxamide from 5-amino-1-(5-phospho-D-ribosyl)imidazole-4-carboxamide (10-formyl THF route): step 1/1. The protein operates within purine metabolism; IMP biosynthesis via de novo pathway; IMP from 5-formamido-1-(5-phospho-D-ribosyl)imidazole-4-carboxamide: step 1/1. The chain is Bifunctional purine biosynthesis protein PurH from Lactobacillus delbrueckii subsp. bulgaricus (strain ATCC BAA-365 / Lb-18).